Consider the following 342-residue polypeptide: Ribosomal RNA small subunit methyltransferase C (342 aa).

This sequence belongs to the methyltransferase superfamily. RsmC family. In terms of assembly, monomer.

It is found in the cytoplasm. The enzyme catalyses guanosine(1207) in 16S rRNA + S-adenosyl-L-methionine = N(2)-methylguanosine(1207) in 16S rRNA + S-adenosyl-L-homocysteine + H(+). Its function is as follows. Specifically methylates the guanine in position 1207 of 16S rRNA in the 30S particle. The polypeptide is Ribosomal RNA small subunit methyltransferase C (Enterobacter sp. (strain 638)).